Reading from the N-terminus, the 453-residue chain is Trigger factor (453 aa).

Residues 171–256 (GDRVTINFKG…ATSIEAPQDI (86 aa)) enclose the PPIase FKBP-type domain.

This sequence belongs to the FKBP-type PPIase family. Tig subfamily.

The protein resides in the cytoplasm. It carries out the reaction [protein]-peptidylproline (omega=180) = [protein]-peptidylproline (omega=0). Functionally, involved in protein export. Acts as a chaperone by maintaining the newly synthesized protein in an open conformation. Functions as a peptidyl-prolyl cis-trans isomerase. This is Trigger factor from Bradyrhizobium diazoefficiens (strain JCM 10833 / BCRC 13528 / IAM 13628 / NBRC 14792 / USDA 110).